The following is a 975-amino-acid chain: Ubiquitin C-terminal hydrolase 15 (975 aa).

Positions 88, 91, 99, 102, 108, 112, 121, and 125 each coordinate Zn(2+). An MYND-type zinc finger spans residues 88-125; that stretch reads CATCHGPAKTRCSRCKSVRYCSGKCQIIHWRQGHKQTC. The tract at residues 301 to 378 is disordered; that stretch reads EGPYASAAES…STKTAVSTNS (78 aa). Polar residues predominate over residues 309–322; it reads ESLQRSNSSGNVTG. Basic and acidic residues predominate over residues 354–369; sequence YDGHEKNPHNKNEQRS. The USP domain maps to 441–747; that stretch reads RGLFNCGNSC…GAYMLFYMRS (307 aa). The Nucleophile role is filled by Cys-450. The active-site Proton acceptor is His-706. Residues 764-783 are disordered; that stretch reads PTCSKRHSSKSSKGSKQDLN.

It belongs to the peptidase C19 family. As to expression, highly expressed in young panicles. Expressed in roots, leaf blades, leaf sheaths and stems. Expressed at low levels in brown grains.

Its subcellular location is the cytoplasm. The protein localises to the nucleus. It catalyses the reaction Thiol-dependent hydrolysis of ester, thioester, amide, peptide and isopeptide bonds formed by the C-terminal Gly of ubiquitin (a 76-residue protein attached to proteins as an intracellular targeting signal).. Its function is as follows. Recognizes and hydrolyzes the peptide bond at the C-terminal Gly of ubiquitin. Involved in the processing of poly-ubiquitin precursors as well as that of ubiquitinated proteins. Involved in the regulation of grain size. Acts as positive regulator of grain width and size by influencing cell proliferation. Functions partially antagonistically with GW2 in the regulation of grain width. Possesses deubiquitinating enzyme activity in vitro. This is Ubiquitin C-terminal hydrolase 15 from Oryza sativa subsp. japonica (Rice).